A 332-amino-acid polypeptide reads, in one-letter code: tRNA uridine(34) hydroxylase (332 aa).

The Rhodanese domain occupies 123–217 (SDPEVLLVDT…YLEEVKQEES (95 aa)). The active-site Cysteine persulfide intermediate is C177. A disordered region spans residues 302–332 (SDVGAVIQSRRDNKENLKKSQVKLNNKKYNK). The segment covering 310–319 (SRRDNKENLK) has biased composition (basic and acidic residues).

It belongs to the TrhO family.

It catalyses the reaction uridine(34) in tRNA + AH2 + O2 = 5-hydroxyuridine(34) in tRNA + A + H2O. In terms of biological role, catalyzes oxygen-dependent 5-hydroxyuridine (ho5U) modification at position 34 in tRNAs. The protein is tRNA uridine(34) hydroxylase of Shewanella woodyi (strain ATCC 51908 / MS32).